The chain runs to 122 residues: Large ribosomal subunit protein uL14c (122 aa).

This sequence belongs to the universal ribosomal protein uL14 family. As to quaternary structure, part of the 50S ribosomal subunit.

The protein resides in the plastid. Its subcellular location is the chloroplast. In terms of biological role, binds to 23S rRNA. This is Large ribosomal subunit protein uL14c (rpl14) from Bigelowiella natans (Pedinomonas minutissima).